Here is a 551-residue protein sequence, read N- to C-terminus: Probable malate:quinone oxidoreductase (551 aa).

Over residues 525–544 (QTAAAAPQAQPQLKPQPDAK) the composition is skewed to low complexity. The disordered stretch occupies residues 525–551 (QTAAAAPQAQPQLKPQPDAKPVADIAL).

This sequence belongs to the MQO family. The cofactor is FAD.

It carries out the reaction (S)-malate + a quinone = a quinol + oxaloacetate. The protein operates within carbohydrate metabolism; tricarboxylic acid cycle; oxaloacetate from (S)-malate (quinone route): step 1/1. This is Probable malate:quinone oxidoreductase from Enterobacter sp. (strain 638).